Reading from the N-terminus, the 82-residue chain is Turripeptide Gsp9.1 (82 aa).

Residues 1 to 23 (MMAKLMITVMMVLLLSLQQGADG) form the signal peptide. A propeptide spanning residues 24–46 (RSKRWRKNQMAASSIMRNLITAR) is cleaved from the precursor. 4-hydroxyproline occurs at positions 49 and 50. 3 disulfides stabilise this stretch: Cys-53-Cys-68, Cys-58-Cys-72, and Cys-64-Cys-79. Residues Glu-60 and Glu-63 each carry the 4-carboxyglutamate modification.

Belongs to the Pg turripeptide superfamily. In terms of tissue distribution, expressed by the venom duct.

It localises to the secreted. This is Turripeptide Gsp9.1 from Gemmula speciosa (Splendid gem-turris).